Reading from the N-terminus, the 192-residue chain is uncharacterized protein (192 aa).

The next 6 helical transmembrane spans lie at 5 to 22 (VPPL…GIGL), 42 to 61 (FLFL…HYVY), 66 to 88 (LRFL…SGKL), 101 to 118 (WGLL…ALNL), 122 to 139 (LVMW…STIL), and 159 to 181 (ALLL…LWLF).

The protein localises to the cell membrane. This is an uncharacterized protein from Treponema pallidum (strain Nichols).